Consider the following 397-residue polypeptide: 1-deoxy-D-xylulose 5-phosphate reductoisomerase (397 aa).

Thr-17, Gly-18, Ser-19, Ile-20, Ala-45, Asn-47, and Asn-130 together coordinate NADPH. Lys-131 contacts 1-deoxy-D-xylulose 5-phosphate. Glu-132 contributes to the NADPH binding site. Residue Asp-156 participates in Mn(2+) binding. 1-deoxy-D-xylulose 5-phosphate-binding residues include Ser-157, Glu-158, Ser-182, and His-205. Mn(2+) is bound at residue Glu-158. Residue Gly-211 participates in NADPH binding. Positions 218, 223, 224, and 227 each coordinate 1-deoxy-D-xylulose 5-phosphate. Glu-227 provides a ligand contact to Mn(2+).

The protein belongs to the DXR family. It depends on Mg(2+) as a cofactor. The cofactor is Mn(2+).

It catalyses the reaction 2-C-methyl-D-erythritol 4-phosphate + NADP(+) = 1-deoxy-D-xylulose 5-phosphate + NADPH + H(+). Its pathway is isoprenoid biosynthesis; isopentenyl diphosphate biosynthesis via DXP pathway; isopentenyl diphosphate from 1-deoxy-D-xylulose 5-phosphate: step 1/6. Its function is as follows. Catalyzes the NADPH-dependent rearrangement and reduction of 1-deoxy-D-xylulose-5-phosphate (DXP) to 2-C-methyl-D-erythritol 4-phosphate (MEP). This Agrobacterium fabrum (strain C58 / ATCC 33970) (Agrobacterium tumefaciens (strain C58)) protein is 1-deoxy-D-xylulose 5-phosphate reductoisomerase.